The following is a 169-amino-acid chain: S-ribosylhomocysteine lyase (169 aa).

The Fe cation site is built by His54, His58, and Cys128.

Belongs to the LuxS family. Homodimer. Fe cation is required as a cofactor.

It catalyses the reaction S-(5-deoxy-D-ribos-5-yl)-L-homocysteine = (S)-4,5-dihydroxypentane-2,3-dione + L-homocysteine. Functionally, involved in the synthesis of autoinducer 2 (AI-2) which is secreted by bacteria and is used to communicate both the cell density and the metabolic potential of the environment. The regulation of gene expression in response to changes in cell density is called quorum sensing. Catalyzes the transformation of S-ribosylhomocysteine (RHC) to homocysteine (HC) and 4,5-dihydroxy-2,3-pentadione (DPD). The polypeptide is S-ribosylhomocysteine lyase (Psychromonas ingrahamii (strain DSM 17664 / CCUG 51855 / 37)).